The chain runs to 374 residues: Putative F-box protein At5g60060 (374 aa).

Residues Ser-9–Lys-61 enclose the F-box domain.

This chain is Putative F-box protein At5g60060, found in Arabidopsis thaliana (Mouse-ear cress).